A 70-amino-acid chain; its full sequence is DNA gyrase inhibitor YacG (70 aa).

Residues C20, C23, C35, and C39 each coordinate Zn(2+).

The protein belongs to the DNA gyrase inhibitor YacG family. Interacts with GyrB. Zn(2+) serves as cofactor.

Functionally, inhibits all the catalytic activities of DNA gyrase by preventing its interaction with DNA. Acts by binding directly to the C-terminal domain of GyrB, which probably disrupts DNA binding by the gyrase. This is DNA gyrase inhibitor YacG from Rhizobium etli (strain ATCC 51251 / DSM 11541 / JCM 21823 / NBRC 15573 / CFN 42).